The primary structure comprises 504 residues: Cytochrome P450 3A1 (504 aa).

Cys-443 is a binding site for heme.

Belongs to the cytochrome P450 family. Heme is required as a cofactor.

Its subcellular location is the endoplasmic reticulum membrane. The protein localises to the microsome membrane. The catalysed reaction is an organic molecule + reduced [NADPH--hemoprotein reductase] + O2 = an alcohol + oxidized [NADPH--hemoprotein reductase] + H2O + H(+). Its function is as follows. Cytochromes P450 are a group of heme-thiolate monooxygenases. In liver microsomes, this enzyme is involved in an NADPH-dependent electron transport pathway. It oxidizes a variety of structurally unrelated compounds, including steroids, fatty acids, and xenobiotics. This Rattus norvegicus (Rat) protein is Cytochrome P450 3A1 (Cyp3a1).